We begin with the raw amino-acid sequence, 157 residues long: Glutathione peroxidase homolog BsaA (157 aa).

C35 is a catalytic residue.

It belongs to the glutathione peroxidase family.

In Halalkalibacterium halodurans (strain ATCC BAA-125 / DSM 18197 / FERM 7344 / JCM 9153 / C-125) (Bacillus halodurans), this protein is Glutathione peroxidase homolog BsaA (bsaA).